Reading from the N-terminus, the 205-residue chain is Isochorismatase domain-containing protein 2 (205 aa).

It belongs to the isochorismatase family. Interacts with CDKN2A.

The protein localises to the cytoplasm. Its subcellular location is the nucleus. This Macaca fascicularis (Crab-eating macaque) protein is Isochorismatase domain-containing protein 2 (ISOC2).